Reading from the N-terminus, the 309-residue chain is Glutaminase (309 aa).

Positions 64, 114, 160, 167, 191, 243, and 261 each coordinate substrate.

It belongs to the glutaminase family. Homotetramer.

It catalyses the reaction L-glutamine + H2O = L-glutamate + NH4(+). The chain is Glutaminase from Methylorubrum extorquens (strain PA1) (Methylobacterium extorquens).